We begin with the raw amino-acid sequence, 216 residues long: ATP phosphoribosyltransferase (216 aa).

The protein belongs to the ATP phosphoribosyltransferase family. Short subfamily. Heteromultimer composed of HisG and HisZ subunits.

The protein localises to the cytoplasm. It catalyses the reaction 1-(5-phospho-beta-D-ribosyl)-ATP + diphosphate = 5-phospho-alpha-D-ribose 1-diphosphate + ATP. The protein operates within amino-acid biosynthesis; L-histidine biosynthesis; L-histidine from 5-phospho-alpha-D-ribose 1-diphosphate: step 1/9. Functionally, catalyzes the condensation of ATP and 5-phosphoribose 1-diphosphate to form N'-(5'-phosphoribosyl)-ATP (PR-ATP). Has a crucial role in the pathway because the rate of histidine biosynthesis seems to be controlled primarily by regulation of HisG enzymatic activity. The protein is ATP phosphoribosyltransferase of Acidovorax ebreus (strain TPSY) (Diaphorobacter sp. (strain TPSY)).